Here is a 545-residue protein sequence, read N- to C-terminus: Ribulokinase (545 aa).

It belongs to the ribulokinase family.

It carries out the reaction D-ribulose + ATP = D-ribulose 5-phosphate + ADP + H(+). The catalysed reaction is L-ribulose + ATP = L-ribulose 5-phosphate + ADP + H(+). It participates in carbohydrate degradation; L-arabinose degradation via L-ribulose; D-xylulose 5-phosphate from L-arabinose (bacterial route): step 2/3. The chain is Ribulokinase from Staphylococcus aureus (strain USA300).